We begin with the raw amino-acid sequence, 372 residues long: BTB/POZ and TAZ domain-containing protein 4 (372 aa).

The interval 14 to 37 (SADSSSVPIPPPLPSKSDGLKKKL) is disordered. One can recognise a BTB domain in the interval 60 to 128 (ADVVIYTDNG…LYSSCYEKEE (69 aa)). Residues 238–330 (RIYSQLYEAM…SDQCRVPLCR (93 aa)) form a TAZ-type zinc finger. A caM-binding region spans residues 341 to 364 (KKDESRWKLLVKNVLGSKKIGGSP).

In terms of assembly, interacts with GTE11/BET10 through the BTB domain. Preferentially expressed in leaves, stems and flowers.

It localises to the cytoplasm. It functions in the pathway protein modification; protein ubiquitination. Functionally, may act as a substrate-specific adapter of an E3 ubiquitin-protein ligase complex (CUL3-RBX1-BTB) which mediates the ubiquitination and subsequent proteasomal degradation of target proteins. This Arabidopsis thaliana (Mouse-ear cress) protein is BTB/POZ and TAZ domain-containing protein 4 (BT4).